The following is a 162-amino-acid chain: Podoplanin (162 aa).

The signal sequence occupies residues 1–22; the sequence is MWKVSALLFVLGSASLWVLAEG. Residues 23-57 are disordered; that stretch reads ASTGQPEDDTETTGLEGGVAMPGAEDDVVTPGTSE. At 23–131 the chain is on the extracellular side; the sequence is ASTGQPEDDT…EKDGLSTVTL (109 aa). 10 O-linked (GalNAc...) threonine glycosylation sites follow: threonine 25, threonine 32, threonine 34, threonine 35, threonine 52, threonine 55, threonine 65, threonine 66, threonine 76, and threonine 85. The segment covering 85 to 108 has biased composition (polar residues); the sequence is TSESTVHAQEQSPSATASNVATSH. The interval 85-119 is disordered; that stretch reads TSESTVHAQEQSPSATASNVATSHSTEKVDGDTQT. 2 O-linked (GalNAc...) serine glycosylation sites follow: serine 86 and serine 88. O-linked (GalNAc...) threonine glycosylation is present at threonine 89. 2 O-linked (GalNAc...) serine glycosylation sites follow: serine 96 and serine 98. Residue threonine 100 is glycosylated (O-linked (GalNAc...) threonine). Residue serine 102 is glycosylated (O-linked (GalNAc...) serine). A glycan (O-linked (GalNAc...) threonine) is linked at threonine 106. 2 O-linked (GalNAc...) serine glycosylation sites follow: serine 107 and serine 109. Residues 109–119 are compositionally biased toward basic and acidic residues; that stretch reads STEKVDGDTQT. O-linked (GalNAc...) threonine glycans are attached at residues threonine 110, threonine 117, threonine 119, and threonine 120. The helical transmembrane segment at 132 to 152 threads the bilayer; the sequence is VGIIVGVLLAIGFIGAIIVVV. The tract at residues 133 to 137 is requires for dimerization and lipid rafts association; it reads GIIVG. Residues 153 to 162 are Cytoplasmic-facing; the sequence is MRKMSGRYSP. Positions 154 to 155 are requires for interaction with MSN and EZR; it reads RK.

It belongs to the podoplanin family. As to quaternary structure, homodimer. Interacts with CLEC1B; the interaction is independent of CLEC1B glycosylation and activates CLEC1B; the interaction is dependent of sialic acid on O-glycans. Interacts with CD9; this interaction is homophilic and attenuates platelet aggregation and pulmonary metastasis induced by PDPN. Interacts with LGALS8; the interaction is glycosylation-dependent; may participate in connection of the lymphatic endothelium to the surrounding extracellular matrix. Interacts with HSPA9. Interacts (via extracellular domain) with CD44; this interaction is required for PDPN-mediated directional migration and regulation of lamellipodia extension/stabilization during cell spreading and migration. Interacts (via cytoplasmic domain) with MSN and EZR; activates RHOA and promotes epithelial-mesenchymal transition. Interacts with CCL21; relocalized PDPN to the basolateral membrane. Extensively O-glycosylated. Contains sialic acid residues. O-glycosylation is necessary for platelet aggregation activity. Disialylated at Thr-52; sialic acid is critical for platelet-aggregating activity and for CLEC1B interaction. Post-translationally, the N-terminus is blocked. In terms of processing, cleaved by a metalloprotease within its extracellular (EC) domain, generating a membrane-bound C-terminal fragment (PCTF33) and an extracellular fragment. The resulting membrane-bound C-terminal fragment (PCTF33) is further processed between Val-150 and Val-151 by PSEN1/gamma-secretase generating the intracellular domain of podoplanin (PICD). In terms of tissue distribution, highly expressed in placenta, lung, skeletal muscle and brain. Weakly expressed in brain, kidney and liver. In placenta, expressed on the apical plasma membrane of endothelium. In lung, expressed in alveolar epithelium. Up-regulated in colorectal tumors and expressed in 25% of early oral squamous cell carcinomas.

It is found in the membrane. The protein localises to the cell projection. The protein resides in the lamellipodium membrane. Its subcellular location is the filopodium membrane. It localises to the microvillus membrane. It is found in the ruffle membrane. The protein localises to the membrane raft. The protein resides in the apical cell membrane. Its subcellular location is the basolateral cell membrane. It localises to the invadopodium. It is found in the cytoplasm. The protein localises to the cytosol. Its function is as follows. Mediates effects on cell migration and adhesion through its different partners. During development plays a role in blood and lymphatic vessels separation by binding CLEC1B, triggering CLEC1B activation in platelets and leading to platelet activation and/or aggregation. Interaction with CD9, on the contrary, attenuates platelet aggregation induced by PDPN. Through MSN or EZR interaction promotes epithelial-mesenchymal transition (EMT) leading to ERZ phosphorylation and triggering RHOA activation leading to cell migration increase and invasiveness. Interaction with CD44 promotes directional cell migration in epithelial and tumor cells. In lymph nodes (LNs), controls fibroblastic reticular cells (FRCs) adhesion to the extracellular matrix (ECM) and contraction of the actomyosin by maintaining ERM proteins (EZR; MSN and RDX) and MYL9 activation through association with unknown transmembrane proteins. Engagement of CLEC1B by PDPN promotes FRCs relaxation by blocking lateral membrane interactions leading to reduction of ERM proteins (EZR; MSN and RDX) and MYL9 activation. Through binding with LGALS8 may participate in connection of the lymphatic endothelium to the surrounding extracellular matrix. In keratinocytes, induces changes in cell morphology showing an elongated shape, numerous membrane protrusions, major reorganization of the actin cytoskeleton, increased motility and decreased cell adhesion. Controls invadopodia stability and maturation leading to efficient degradation of the extracellular matrix (ECM) in tumor cells through modulation of RHOC activity in order to activate ROCK1/ROCK2 and LIMK1/LIMK2 and inactivation of CFL1. Required for normal lung cell proliferation and alveolus formation at birth. Does not function as a water channel or as a regulator of aquaporin-type water channels. Does not have any effect on folic acid or amino acid transport. The sequence is that of Podoplanin from Homo sapiens (Human).